Reading from the N-terminus, the 43-residue chain is METATVLIIFIASLLLGLTGYSIYTAFGPNSKELRDPFDDHED.

A helical membrane pass occupies residues L7 to F27.

This sequence belongs to the PsbN family.

It localises to the plastid. Its subcellular location is the chloroplast thylakoid membrane. Its function is as follows. May play a role in photosystem I and II biogenesis. The protein is Protein PsbN of Guillardia theta (Cryptophyte).